The primary structure comprises 546 residues: Beta-amylase (546 aa).

An N-terminal signal peptide occupies residues 1 to 30 (MKNQFQYCCIVILSVVMLFVSLLIPQASSA). Substrate is bound at residue Asp79. The Ca(2+) site is built by Glu86, Asp90, and Gln91. Substrate is bound by residues His119 and Asp127. Cys121 and Cys129 form a disulfide bridge. 2 residues coordinate Ca(2+): Glu171 and Glu174. Glu202 acts as the Proton donor in catalysis. Substrate-binding residues include Lys317, His322, and Thr360. Glu397 acts as the Proton acceptor in catalysis. Residues 398–399 (NA) and Arg427 each bind substrate. The CBM20 domain maps to 444-546 (LLGVTPVMQT…LKTTSHTSSW (103 aa)).

The protein belongs to the glycosyl hydrolase 14 family. As to quaternary structure, monomer. Ca(2+) is required as a cofactor.

It catalyses the reaction Hydrolysis of (1-&gt;4)-alpha-D-glucosidic linkages in polysaccharides so as to remove successive maltose units from the non-reducing ends of the chains.. This is Beta-amylase (spoII) from Bacillus cereus.